A 734-amino-acid chain; its full sequence is ATP-dependent RNA helicase SUV3L, mitochondrial (734 aa).

The transit peptide at 1–60 (MAAAAAIAAALLRRSTSSQHHRRILLLPLLSHLQRAAPRSPSPWDPPPHHRFFFSSDVTA) directs the protein to the mitochondrion. The segment at 58–88 (VTAEGDSKPRPPLDGKQLWREVSTSEPATGA) is disordered. The span at 62–76 (GDSKPRPPLDGKQLW) shows a compositional bias: basic and acidic residues. The region spanning 198–356 (FARAMRRRVV…RFKPLVVEAK (159 aa)) is the Helicase ATP-binding domain. An ATP-binding site is contributed by 211–218 (GPTNSGKT). In terms of domain architecture, Helicase C-terminal spans 357–525 (TLLGDLKNVR…SFAIQFPDLT (169 aa)). N594 and N614 each carry an N-linked (GlcNAc...) asparagine glycan. A disordered region spans residues 667-734 (ASWKPTSRQQ…QDPSSLNFVA (68 aa)). Positions 684 to 693 (EEDNDVEQAS) are enriched in acidic residues. Over residues 695–709 (DNAKNDSEDGYERSI) the composition is skewed to basic and acidic residues. The N-linked (GlcNAc...) asparagine glycan is linked to N699. Over residues 725–734 (QDPSSLNFVA) the composition is skewed to polar residues.

This sequence belongs to the helicase family. Homodimer; in free form. Component of the mitochondrial degradosome (mtEXO) complex which is a heteropentamer containing 2 copies of SUPV3L1 and 3 copies of PNPT1. The cofactor is Mg(2+). It depends on Mn(2+) as a cofactor.

Its subcellular location is the nucleus. The protein resides in the mitochondrion matrix. It localises to the mitochondrion nucleoid. It carries out the reaction ATP + H2O = ADP + phosphate + H(+). Functionally, major helicase player in mitochondrial RNA metabolism. Component of the mitochondrial degradosome (mtEXO) complex, that degrades 3' overhang double-stranded RNA with a 3'-to-5' directionality in an ATP-dependent manner. ATPase and ATP-dependent multisubstrate helicase, able to unwind double-stranded (ds) DNA and RNA, and RNA/DNA heteroduplexes in the 5'-to-3' direction. Plays a role in the RNA surveillance system in mitochondria; regulates the stability of mature mRNAs, the removal of aberrantly formed mRNAs and the rapid degradation of non coding processing intermediates. Confers salinity and drought stress tolerances by maintaining both photosynthesis and antioxidant machinery, probably via an increase in plant hormones levels such as gibberellic acid (GA(3)), the cytokinin zeatin (Z) and indole-3-acetic acid (IAA). The protein is ATP-dependent RNA helicase SUV3L, mitochondrial of Oryza sativa subsp. japonica (Rice).